Consider the following 532-residue polypeptide: Probable cytochrome c oxidase subunit 1 (532 aa).

Helical transmembrane passes span 33–53 (IMYI…SLLF), 74–94 (VLIT…ALFG), 95–115 (GFGN…FPRL), 118–138 (ISFW…FVDG), 163–183 (MAIF…INLI), 200–220 (PLFV…MPVL), 252–272 (LFWF…FGIV), and 284–304 (IFGY…GFIV). A Fe(II)-heme a-binding site is contributed by histidine 79. Residues histidine 258 and tyrosine 262 each contribute to the Cu cation site. The Cu cation site is built by histidine 307 and histidine 308. The next 2 helical transmembrane spans lie at 318 to 338 (ALIY…IKIF) and 355 to 375 (MLFS…GIIL). Histidine 393 lines the heme a3 pocket. 3 consecutive transmembrane segments (helical) span residues 394–414 (FHYT…YYWF), 431–451 (FWIT…LGLA), and 473–493 (IGAG…FYTL). Histidine 395 serves as a coordination point for Fe(II)-heme a.

The protein belongs to the heme-copper respiratory oxidase family.

It localises to the cell membrane. The enzyme catalyses 4 Fe(II)-[cytochrome c] + O2 + 8 H(+)(in) = 4 Fe(III)-[cytochrome c] + 2 H2O + 4 H(+)(out). The protein operates within energy metabolism; oxidative phosphorylation. In terms of biological role, cytochrome c oxidase is the component of the respiratory chain that catalyzes the reduction of oxygen to water. Subunits 1-3 form the functional core of the enzyme complex. CO I is the catalytic subunit of the enzyme. Electrons originating in cytochrome c are transferred via the copper A center of subunit 2 and heme A of subunit 1 to the bimetallic center formed by heme A3 and copper B. The chain is Probable cytochrome c oxidase subunit 1 (ctaD) from Rickettsia bellii (strain RML369-C).